The sequence spans 612 residues: Peroxisomal carnitine O-octanoyltransferase (612 aa).

At Met1 the chain carries N-acetylmethionine. Lys40 and Lys57 each carry N6-succinyllysine. His327 serves as the catalytic Proton acceptor. CoA is bound by residues Lys406 and 410–417 (KKEALHPD). Residue Lys406 is modified to N6-acetyllysine; alternate. An N6-succinyllysine; alternate modification is found at Lys406. (R)-carnitine is bound by residues Tyr439, Thr441, and Thr452. The short motif at 610 to 612 (AHL) is the Microbody targeting signal element.

The protein belongs to the carnitine/choline acetyltransferase family. In terms of tissue distribution, liver.

The protein resides in the peroxisome. The catalysed reaction is octanoyl-CoA + (R)-carnitine = O-octanoyl-(R)-carnitine + CoA. It carries out the reaction 4,8-dimethylnonanoyl-CoA + (R)-carnitine = O-4,8-dimethylnonanoyl-(R)-carnitine + CoA. It participates in lipid metabolism; fatty acid beta-oxidation. Functionally, beta-oxidation of fatty acids. The highest activity concerns the C6 to C10 chain length substrate. This is Peroxisomal carnitine O-octanoyltransferase (Crot) from Rattus norvegicus (Rat).